The primary structure comprises 242 residues: Myogenic factor 6 (242 aa).

The segment at 31–63 is disordered; it reads SPLYPGSDGTLSPCQDQMPPEAGSDSSGEEHVL. Residues 93 to 144 form the bHLH domain; sequence DRRKAATLRERRRLKKINEAFEALKRRTVANPNQRLPKVEILRSAINYIERL.

In terms of assembly, efficient DNA binding requires dimerization with another bHLH protein.

It localises to the nucleus. Functionally, involved in muscle differentiation (myogenic factor). Induces fibroblasts to differentiate into myoblasts. Probable sequence specific DNA-binding protein. This is Myogenic factor 6 (MYF6) from Sus scrofa (Pig).